The sequence spans 182 residues: Adenine phosphoribosyltransferase (182 aa).

It belongs to the purine/pyrimidine phosphoribosyltransferase family. In terms of assembly, homodimer.

The protein resides in the cytoplasm. It catalyses the reaction AMP + diphosphate = 5-phospho-alpha-D-ribose 1-diphosphate + adenine. It participates in purine metabolism; AMP biosynthesis via salvage pathway; AMP from adenine: step 1/1. Catalyzes a salvage reaction resulting in the formation of AMP, that is energically less costly than de novo synthesis. In Campylobacter hominis (strain ATCC BAA-381 / DSM 21671 / CCUG 45161 / LMG 19568 / NCTC 13146 / CH001A), this protein is Adenine phosphoribosyltransferase.